The following is a 554-amino-acid chain: Protein SINE2 (554 aa).

The interval 17–290 is ARMADILLO-type fold; that stretch reads DKDPDSHKTA…MAAHETMRQA (274 aa). 3 disordered regions span residues 306 to 332, 411 to 442, and 465 to 487; these read CKPR…VYSR, NESV…KHHR, and ETSS…TTED. Over residues 311-321 the composition is skewed to low complexity; that stretch reads SLSGSVKSTSS. The segment covering 322–332 has biased composition (basic and acidic residues); that stretch reads LREHDGSVYSR. Residues 419–431 are compositionally biased toward basic residues; it reads NRSRSSRRNTKKR. Residues 465-485 are compositionally biased toward low complexity; that stretch reads ETSSSSSIYDTSGTTTPTNTT. Residues 509–554 enclose the KASH domain; that stretch reads LDPRLGRSKGVLKLGLSVFSIAVAGFASFMWMYLQDDMMPPHLVPT. The helical transmembrane segment at 522 to 542 threads the bilayer; it reads LGLSVFSIAVAGFASFMWMYL. Residues 551–554 carry the Required for nuclear localization motif; that stretch reads LVPT.

As to quaternary structure, interacts with SUN1 and SUN2. In terms of tissue distribution, expressed in epidermal cells, mesophyll cells, trichomes and root cells.

The protein localises to the nucleus membrane. In terms of biological role, plays a role in innate immunity against the oomycete pathogen A.arabidopsidis (Hpa). The chain is Protein SINE2 from Arabidopsis thaliana (Mouse-ear cress).